A 60-amino-acid chain; its full sequence is Stress response protein YkoL (60 aa).

This chain is Stress response protein YkoL (ykoL), found in Bacillus subtilis (strain 168).